Reading from the N-terminus, the 388-residue chain is Probable serine/threonine-protein kinase PBL20 (388 aa).

C3 is lipidated: S-palmitoyl cysteine. In terms of domain architecture, Protein kinase spans 91-372; the sequence is FSRKLKIGEG…FVVESLTNII (282 aa). ATP contacts are provided by residues 97 to 105 and K128; that span reads IGEGGFGSV. The active-site Proton acceptor is the D221.

Belongs to the protein kinase superfamily. Ser/Thr protein kinase family.

It localises to the cell membrane. It catalyses the reaction L-seryl-[protein] + ATP = O-phospho-L-seryl-[protein] + ADP + H(+). It carries out the reaction L-threonyl-[protein] + ATP = O-phospho-L-threonyl-[protein] + ADP + H(+). In terms of biological role, may be involved in plant defense signaling. This chain is Probable serine/threonine-protein kinase PBL20, found in Arabidopsis thaliana (Mouse-ear cress).